The chain runs to 126 residues: Small ribosomal subunit protein eS8 (126 aa).

Residues 1 to 10 (MAIWQGSSLR) show a composition bias toward polar residues. The segment at 1–35 (MAIWQGSSLRKPSGARSRRNKNKRNAEFGRNPAET) is disordered.

This sequence belongs to the eukaryotic ribosomal protein eS8 family. In terms of assembly, part of the 30S ribosomal subunit.

This chain is Small ribosomal subunit protein eS8, found in Methanosphaera stadtmanae (strain ATCC 43021 / DSM 3091 / JCM 11832 / MCB-3).